Here is a 298-residue protein sequence, read N- to C-terminus: Cyclin-dependent kinase 2 homolog (298 aa).

Residues 4-284 (YHKMEKIGEG…AKEALKHDYF (281 aa)) form the Protein kinase domain. ATP is bound by residues 10–18 (IGEGTYGVV) and Lys-32. Thr-14 bears the Phosphothreonine mark. Tyr-15 bears the Phosphotyrosine mark. Asp-125 acts as the Proton acceptor in catalysis. Position 158 is a phosphothreonine (Thr-158).

It belongs to the protein kinase superfamily. CMGC Ser/Thr protein kinase family. CDC2/CDKX subfamily. As to quaternary structure, may form a complex composed of at least the catalytic subunit CRK2 and a cyclin. Mg(2+) serves as cofactor.

The protein resides in the cytoplasm. It carries out the reaction L-seryl-[protein] + ATP = O-phospho-L-seryl-[protein] + ADP + H(+). The enzyme catalyses L-threonyl-[protein] + ATP = O-phospho-L-threonyl-[protein] + ADP + H(+). The catalysed reaction is [DNA-directed RNA polymerase] + ATP = phospho-[DNA-directed RNA polymerase] + ADP + H(+). With respect to regulation, phosphorylation at Thr-14 or Tyr-15 inactivates the enzyme, while phosphorylation at Thr-158 activates it. Functionally, serine/threonine-protein kinase. Involved in the control of the cell cycle. Required for entry into S-phase and mitosis. Probable component of the kinase complex that phosphorylates the repetitive C-terminus of RNA polymerase II. The polypeptide is Cyclin-dependent kinase 2 homolog (Theileria annulata).